A 233-amino-acid chain; its full sequence is Mediator of RNA polymerase II transcription subunit 7 (233 aa).

Lys-185 is covalently cross-linked (Glycyl lysine isopeptide (Lys-Gly) (interchain with G-Cter in SUMO1); alternate). Lys-185 is covalently cross-linked (Glycyl lysine isopeptide (Lys-Gly) (interchain with G-Cter in SUMO2); alternate). A disordered region spans residues Glu-187–Asp-213. Ser-194 is subject to Phosphoserine. Over residues Glu-202–Asp-213 the composition is skewed to basic and acidic residues.

This sequence belongs to the Mediator complex subunit 7 family. Component of the Mediator complex, which is composed of MED1, MED4, MED6, MED7, MED8, MED9, MED10, MED11, MED12, MED13, MED13L, MED14, MED15, MED16, MED17, MED18, MED19, MED20, MED21, MED22, MED23, MED24, MED25, MED26, MED27, MED29, MED30, MED31, CCNC, CDK8 and CDC2L6/CDK11. The MED12, MED13, CCNC and CDK8 subunits form a distinct module termed the CDK8 module. Mediator containing the CDK8 module is less active than Mediator lacking this module in supporting transcriptional activation. Individual preparations of the Mediator complex lacking one or more distinct subunits have been variously termed ARC, CRSP, DRIP, PC2, SMCC and TRAP. Post-translationally, constitutively sumoylated.

The protein localises to the nucleus. Component of the Mediator complex, a coactivator involved in the regulated transcription of nearly all RNA polymerase II-dependent genes. Mediator functions as a bridge to convey information from gene-specific regulatory proteins to the basal RNA polymerase II transcription machinery. Mediator is recruited to promoters by direct interactions with regulatory proteins and serves as a scaffold for the assembly of a functional preinitiation complex with RNA polymerase II and the general transcription factors. The polypeptide is Mediator of RNA polymerase II transcription subunit 7 (MED7) (Homo sapiens (Human)).